A 414-amino-acid chain; its full sequence is WD repeat-containing protein jip5 (414 aa).

WD repeat units lie at residues 9–48, 73–112, 118–159, 222–263, and 319–356; these read PLSA…SDTD, RHKG…VENK, AKDG…SPVS, VSSV…DQDE, and DETE…DGMD. A disordered region spans residues 39-65; that stretch reads RLPSEESDTDGDGAESTSSSRNGKGHI. Residues 352–414 form a disordered region; sequence SDGMDGDMAG…QDIMGFADID (63 aa). The span at 369–383 shows a compositional bias: acidic residues; it reads DSDDSDDGDDSDDSD.

The protein belongs to the WD repeat WDR55 family.

The protein resides in the nucleus. The protein localises to the nucleolus. The protein is WD repeat-containing protein jip5 (jip5) of Neosartorya fischeri (strain ATCC 1020 / DSM 3700 / CBS 544.65 / FGSC A1164 / JCM 1740 / NRRL 181 / WB 181) (Aspergillus fischerianus).